The chain runs to 75 residues: DNA-directed RNA polymerase subunit Rpo5 (75 aa).

Belongs to the archaeal Rpo5/eukaryotic RPB5 RNA polymerase subunit family. Part of the RNA polymerase complex.

The protein localises to the cytoplasm. It catalyses the reaction RNA(n) + a ribonucleoside 5'-triphosphate = RNA(n+1) + diphosphate. Its function is as follows. DNA-dependent RNA polymerase (RNAP) catalyzes the transcription of DNA into RNA using the four ribonucleoside triphosphates as substrates. The protein is DNA-directed RNA polymerase subunit Rpo5 of Pyrobaculum aerophilum (strain ATCC 51768 / DSM 7523 / JCM 9630 / CIP 104966 / NBRC 100827 / IM2).